A 239-amino-acid chain; its full sequence is Peptidyl-tRNA hydrolase (239 aa).

Tyr14 is a tRNA binding site. The active-site Proton acceptor is His19. TRNA-binding residues include Phe64, Asn66, and Asn112. Positions 199-227 are disordered; the sequence is EKPAQKGRSHIRQARPKAPPAELPSSGPM. Basic residues predominate over residues 203 to 213; the sequence is QKGRSHIRQAR.

It belongs to the PTH family. In terms of assembly, monomer.

Its subcellular location is the cytoplasm. It catalyses the reaction an N-acyl-L-alpha-aminoacyl-tRNA + H2O = an N-acyl-L-amino acid + a tRNA + H(+). Functionally, hydrolyzes ribosome-free peptidyl-tRNAs (with 1 or more amino acids incorporated), which drop off the ribosome during protein synthesis, or as a result of ribosome stalling. Its function is as follows. Catalyzes the release of premature peptidyl moieties from peptidyl-tRNA molecules trapped in stalled 50S ribosomal subunits, and thus maintains levels of free tRNAs and 50S ribosomes. This Chelativorans sp. (strain BNC1) protein is Peptidyl-tRNA hydrolase.